A 600-amino-acid polypeptide reads, in one-letter code: DDB1- and CUL4-associated factor 15 (600 aa).

The segment at Met1 to Val29 is disordered. Gly residues predominate over residues Gly14–Arg27. At Ser50 the chain carries Phosphoserine. Positions 193, 196, 211, and 214 each coordinate Zn(2+). Residue Ser314 is modified to Phosphoserine. A compositionally biased stretch (basic and acidic residues) spans Ala334–Arg343. Positions Ala334–Pro384 are disordered. 2 stretches are compositionally biased toward low complexity: residues Leu344–Leu359 and Pro374–Pro384.

Component of the DCX(DCAF15) complex, also named CLR4(DCAF15) complex, composed of DCAF15, DDB1, cullin-4 (CUL4A or CUL4B), DDA1 and RBX1.

It participates in protein modification; protein ubiquitination. Its function is as follows. Substrate-recognition component of the DCX(DCAF15) complex, a cullin-4-RING E3 ubiquitin-protein ligase complex that mediates ubiquitination and degradation of target proteins. The DCX(DCAF15) complex acts as a regulator of the natural killer (NK) cells effector functions, possibly by mediating ubiquitination and degradation of cohesin subunits SMC1A and SMC3. May play a role in the activation of antigen-presenting cells (APC) and their interaction with NK cells. The polypeptide is DDB1- and CUL4-associated factor 15 (Mus musculus (Mouse)).